The following is a 647-amino-acid chain: Neutral endopeptidase (647 aa).

One can recognise a Peptidase M13 domain in the interval 1–647; it reads MRRYLAVRGG…LDPEDRITIW (647 aa). Position 496 (histidine 496) interacts with Zn(2+). The active site involves glutamate 497. Histidine 500 and glutamate 556 together coordinate Zn(2+). The Proton donor role is filled by aspartate 560.

Belongs to the peptidase M13 family. It depends on Zn(2+) as a cofactor.

This chain is Neutral endopeptidase (pepO), found in Lactobacillus helveticus (Lactobacillus suntoryeus).